Reading from the N-terminus, the 875-residue chain is Alanine--tRNA ligase (875 aa).

Zn(2+)-binding residues include His564, His568, Cys666, and His670.

This sequence belongs to the class-II aminoacyl-tRNA synthetase family. Homotetramer. The cofactor is Zn(2+).

Its subcellular location is the cytoplasm. It carries out the reaction tRNA(Ala) + L-alanine + ATP = L-alanyl-tRNA(Ala) + AMP + diphosphate. Catalyzes the attachment of alanine to tRNA(Ala) in a two-step reaction: alanine is first activated by ATP to form Ala-AMP and then transferred to the acceptor end of tRNA(Ala). Also edits incorrectly charged Ser-tRNA(Ala) and Gly-tRNA(Ala) via its editing domain. This is Alanine--tRNA ligase from Yersinia enterocolitica serotype O:8 / biotype 1B (strain NCTC 13174 / 8081).